We begin with the raw amino-acid sequence, 323 residues long: RNA polymerase II holoenzyme cyclin-like subunit (323 aa).

The 132-residue stretch at Asp-45 to Ile-176 folds into the Cyclin N-terminal domain.

The protein belongs to the cyclin family. Cyclin C subfamily. As to quaternary structure, component of the SRB8-11 complex which consists of SRB8, SSN2/SRB9, SSN3/SRB10 and SSN8/SRB11. The SRB8-11 complex associates with the Mediator complex. The SSN3/SRB10 and SSN8/SRB11 kinase-cyclin pair also associate with the RNA polymerase II holoenzyme. Interacts with ASK10.

It localises to the nucleus. Its function is as follows. Component of the SRB8-11 complex. The SRB8-11 complex is a regulatory module of the Mediator complex which is itself involved in regulation of basal and activated RNA polymerase II-dependent transcription. The SRB8-11 complex may be involved in the transcriptional repression of a subset of genes regulated by Mediator. It may inhibit the association of the Mediator complex with RNA polymerase II to form the holoenzyme complex. The SRB8-11 complex phosphorylates the C-terminal domain (CTD) of the largest subunit of RNA polymerase II RPB1 at serines 2 and 5. The SSN3/SRB10 and SSN8/SRB11 kinase-cyclin pair may also positively and negatively regulate numerous transcriptional activators in response to changes in nutritional and physiological conditions. The polypeptide is RNA polymerase II holoenzyme cyclin-like subunit (SSN8) (Saccharomyces cerevisiae (strain ATCC 204508 / S288c) (Baker's yeast)).